The following is a 51-amino-acid chain: Defensin-like protein 2A (51 aa).

Q1 bears the Pyrrolidone carboxylic acid mark. Cystine bridges form between C4–C51, C15–C36, C21–C45, and C25–C47. At S8 the chain carries Phosphoserine; by CPK.

As to quaternary structure, forms oligomers in its native state.

Its function is as follows. Possesses antifungal activity sensitive to inorganic cations. In Sinapis alba (White mustard), this protein is Defensin-like protein 2A.